The chain runs to 445 residues: Fasciclin-like arabinogalactan protein 16 (445 aa).

The first 23 residues, 1–23 (MDSSYGATKFLLLLFLTTSIATA), serve as a signal peptide directing secretion. 2 FAS1 domains span residues 35 to 173 (NSNS…ERLL) and 257 to 400 (VKDF…DGVL). N-linked (GlcNAc...) asparagine glycosylation is found at asparagine 72 and asparagine 279.

Belongs to the fasciclin-like AGP family.

The protein resides in the secreted. In terms of biological role, may be a cell surface adhesion protein. The sequence is that of Fasciclin-like arabinogalactan protein 16 (FLA16) from Arabidopsis thaliana (Mouse-ear cress).